Reading from the N-terminus, the 482-residue chain is C3a anaphylatoxin chemotactic receptor (482 aa).

The Extracellular segment spans residues 1–23 (MASFSAETNSTDLLSQPWNEPPV). Asn-9 carries an N-linked (GlcNAc...) asparagine glycan. The helical transmembrane segment at 24–46 (ILSMVILSLTFLLGLPGNGLVLW) threads the bilayer. At 47-57 (VAGLKMQRTVN) the chain is on the cytoplasmic side. A helical transmembrane segment spans residues 58-80 (TIWFLHLTLADLLCCLSLPFSLA). Over 81 to 96 (HLALQGQWPYGRFLCK) the chain is Extracellular. Cys-95 and Cys-172 are oxidised to a cystine. A helical membrane pass occupies residues 97–118 (LIPSIIVLNMFASVFLLTAISL). Residues 119 to 139 (DRCLVVFKPIWCQNHRNVGMA) lie on the Cytoplasmic side of the membrane. Residues 140-160 (CSICGCIWVVAFVMCIPVFVY) form a helical membrane-spanning segment. At 161 to 340 (REIFTTDNHN…TPLVAITITR (180 aa)) the chain is on the extracellular side. Sulfotyrosine occurs at positions 174 and 184. Asn-194 carries N-linked (GlcNAc...) asparagine glycosylation. Residue Ser-266 is glycosylated (O-linked (GalNAc...) serine). Tyr-318 carries the post-translational modification Sulfotyrosine. A helical membrane pass occupies residues 341 to 360 (LVVGFLLPSVIMIACYSFIV). Topologically, residues 361-377 (FRMQRGRFAKSQSKTFR) are cytoplasmic. The helical transmembrane segment at 378–400 (VAVVVVAVFLVCWTPYHIFGVLS) threads the bilayer. At 401–417 (LLTDPETPLGKTLMSWD) the chain is on the extracellular side. Residues 418-438 (HVCIALASANSCFNPFLYALL) form a helical membrane-spanning segment. The Cytoplasmic portion of the chain corresponds to 439–482 (GKDFRKKARQSIQGILEAAFSEELTRSTHCPSNNVISERNSTTV). Position 459 is a phosphoserine (Ser-459). Thr-463 carries the phosphothreonine modification.

Belongs to the G-protein coupled receptor 1 family. In terms of assembly, interacts with VGF-derived peptide TLQP-21. Among the sulfation sites Tyr-174 is essential for binding of C3a anaphylatoxin. In terms of processing, O-glycosylated. In terms of tissue distribution, widely expressed in several differentiated hematopoietic cell lines, in the lung, spleen, ovary, placenta, small intestine, throughout the brain, heart, and endothelial cells. Mostly expressed in lymphoid tissues.

It localises to the cell membrane. Its function is as follows. Receptor for the chemotactic and inflammatory peptide anaphylatoxin C3a. This receptor stimulates chemotaxis, granule enzyme release and superoxide anion production. In Homo sapiens (Human), this protein is C3a anaphylatoxin chemotactic receptor (C3AR1).